The primary structure comprises 395 residues: Nickel and cobalt resistance protein CnrB (395 aa).

The helical transmembrane segment at 13 to 33 threads the bilayer; sequence MIAGVAAVAAAVGFGAAHLPV. The segment at 35 to 55 is disordered; the sequence is EKSPASTQAPEAQKPQSAPVK. Polar residues predominate over residues 37 to 50; it reads SPASTQAPEAQKPQ. Positions 140 to 193 form a coiled coil; that stretch reads AAERKVAQAKADLARKTYEREASLFQQGVTPRQEMEAAKAALDVAQAEALRAAT.

Belongs to the membrane fusion protein (MFP) (TC 8.A.1) family.

It is found in the cell inner membrane. Its function is as follows. The products of the genes cnrA, cnrB, and cnrC are likely to form a membrane-bound protein complex catalyzing an energy-dependent efflux of Ni(2+) and Co(2+). The mechanism of action of the CnrCBA complex may be that of a proton/cation antiporter. The protein is Nickel and cobalt resistance protein CnrB (cnrB) of Cupriavidus metallidurans (strain ATCC 43123 / DSM 2839 / NBRC 102507 / CH34) (Ralstonia metallidurans).